The following is a 248-amino-acid chain: Cobalt-precorrin-6A reductase (248 aa).

The protein belongs to the precorrin-6x reductase family.

It catalyses the reaction Co-precorrin-6B + NAD(+) = Co-precorrin-6A + NADH + H(+). Its pathway is cofactor biosynthesis; adenosylcobalamin biosynthesis; cob(II)yrinate a,c-diamide from sirohydrochlorin (anaerobic route): step 7/10. In terms of biological role, catalyzes the reduction of the macrocycle of cobalt-precorrin-6A to cobalt-precorrin-6B. This Methanococcus maripaludis (Methanococcus deltae) protein is Cobalt-precorrin-6A reductase (cbiJ).